Consider the following 931-residue polypeptide: Protocadherin gamma-A5 (931 aa).

The first 29 residues, 1–29 (MASPPRGWGCGELLLPFMLLGTLCEPGSG), serve as a signal peptide directing secretion. Cadherin domains follow at residues 30–133 (QIRY…FPRF), 134–242 (RDEE…APLF), 243–347 (TPSE…APEV), 348–452 (ILTS…PPNF), 453–562 (PQAS…TPEI), and 570–683 (DGST…TPID). Over 30-692 (QIRYSMPEEL…DPEDLDLTLY (663 aa)) the chain is Extracellular. 2 N-linked (GlcNAc...) asparagine glycosylation sites follow: N419 and N545. The chain crosses the membrane as a helical span at residues 693 to 713 (LVVAVAAVSCVFLAFVIVLLV). Over 714 to 931 (LRLRRWHKSR…KKKSGKKEKK (218 aa)) the chain is Cytoplasmic. 2 disordered regions span residues 800-840 (NKEE…WPNN) and 901-931 (ATLT…KEKK). Positions 809–840 (APPNTDWRFSQAQRPGTSGSQNGDDTGTWPNN) are enriched in polar residues. The span at 921-931 (NKKKSGKKEKK) shows a compositional bias: basic residues.

Its subcellular location is the cell membrane. In terms of biological role, potential calcium-dependent cell-adhesion protein. May be involved in the establishment and maintenance of specific neuronal connections in the brain. This Homo sapiens (Human) protein is Protocadherin gamma-A5 (PCDHGA5).